Consider the following 261-residue polypeptide: Enoyl-[acyl-carrier-protein] reductase [NADH] FabI (261 aa).

NAD(+)-binding positions include G15, 21 to 22 (SI), Q42, 66 to 67 (DV), and M94. Position 97 (A97) interacts with substrate. Residues Y147 and Y157 each act as proton acceptor in the active site. Residues K164 and 193–197 (IKTLA) each bind NAD(+).

This sequence belongs to the short-chain dehydrogenases/reductases (SDR) family. FabI subfamily. In terms of assembly, homotetramer.

The enzyme catalyses a 2,3-saturated acyl-[ACP] + NAD(+) = a (2E)-enoyl-[ACP] + NADH + H(+). It functions in the pathway lipid metabolism; fatty acid biosynthesis. Catalyzes the reduction of a carbon-carbon double bond in an enoyl moiety that is covalently linked to an acyl carrier protein (ACP). Involved in the elongation cycle of fatty acid which are used in the lipid metabolism. In Rickettsia prowazekii (strain Madrid E), this protein is Enoyl-[acyl-carrier-protein] reductase [NADH] FabI (fabI).